We begin with the raw amino-acid sequence, 467 residues long: Repressible acid phosphatase (467 aa).

Residues 1-17 form the signal peptide; it reads MFKSVVYSILAASLANA. The active-site Nucleophile is His75. N-linked (GlcNAc...) asparagine glycans are attached at residues Asn97, Asn103, Asn162, Asn192, Asn250, and Asn315. The active-site Proton donor is the Asp338. Residues Asn356, Asn390, Asn439, Asn445, Asn456, and Asn461 are each glycosylated (N-linked (GlcNAc...) asparagine).

The protein belongs to the histidine acid phosphatase family. Post-translationally, glycosylated during secretion across the membrane.

It localises to the secreted. The catalysed reaction is a phosphate monoester + H2O = an alcohol + phosphate. Partially mediates extracellular nucleotide derived phosphate hydrolysis along with NPP1 and NPP2. The chain is Repressible acid phosphatase (PHO5) from Saccharomyces cerevisiae (strain ATCC 204508 / S288c) (Baker's yeast).